The following is a 382-amino-acid chain: Protein RecA (382 aa).

79–86 contributes to the ATP binding site; the sequence is GPESSGKT. The disordered stretch occupies residues 362–382; the sequence is ATKSAAKGSEVQADVKTKGAA.

This sequence belongs to the RecA family.

The protein localises to the cytoplasm. Functionally, can catalyze the hydrolysis of ATP in the presence of single-stranded DNA, the ATP-dependent uptake of single-stranded DNA by duplex DNA, and the ATP-dependent hybridization of homologous single-stranded DNAs. It interacts with LexA causing its activation and leading to its autocatalytic cleavage. This chain is Protein RecA, found in Synechococcus sp. (strain WH7803).